The following is a 509-amino-acid chain: Lanosterol 14-alpha demethylase (509 aa).

Residues 30 to 50 (GNLLSMLLIACAFTLSLVYLF) traverse the membrane as a helical segment. C455 provides a ligand contact to heme.

It belongs to the cytochrome P450 family. It depends on heme as a cofactor. Post-translationally, ubiquitinated by MARCHF6, leading to proteasomal degradation.

It localises to the endoplasmic reticulum membrane. Its subcellular location is the microsome membrane. It carries out the reaction a 14alpha-methyl steroid + 3 reduced [NADPH--hemoprotein reductase] + 3 O2 = a Delta(14) steroid + formate + 3 oxidized [NADPH--hemoprotein reductase] + 4 H2O + 4 H(+). The enzyme catalyses lanosterol + 3 reduced [NADPH--hemoprotein reductase] + 3 O2 = 4,4-dimethyl-5alpha-cholesta-8,14,24-trien-3beta-ol + formate + 3 oxidized [NADPH--hemoprotein reductase] + 4 H2O + 4 H(+). The catalysed reaction is 24,25-dihydrolanosterol + 3 reduced [NADPH--hemoprotein reductase] + 3 O2 = 4,4-dimethyl-8,14-cholestadien-3beta-ol + formate + 3 oxidized [NADPH--hemoprotein reductase] + 4 H2O + 4 H(+). It catalyses the reaction a 14alpha-methyl steroid + reduced [NADPH--hemoprotein reductase] + O2 = a 14alpha-hydroxymethyl steroid + oxidized [NADPH--hemoprotein reductase] + H2O + H(+). It carries out the reaction a 14alpha-hydroxymethyl steroid + reduced [NADPH--hemoprotein reductase] + O2 = a 14alpha-formyl steroid + oxidized [NADPH--hemoprotein reductase] + 2 H2O + H(+). The enzyme catalyses a 14alpha-formyl steroid + reduced [NADPH--hemoprotein reductase] + O2 = a Delta(14) steroid + formate + oxidized [NADPH--hemoprotein reductase] + H2O + 2 H(+). The catalysed reaction is lanosterol + reduced [NADPH--hemoprotein reductase] + O2 = 32-hydroxylanosterol + oxidized [NADPH--hemoprotein reductase] + H2O + H(+). It catalyses the reaction 32-hydroxylanosterol + reduced [NADPH--hemoprotein reductase] + O2 = 32-oxolanosterol + oxidized [NADPH--hemoprotein reductase] + 2 H2O + H(+). It carries out the reaction 32-oxolanosterol + reduced [NADPH--hemoprotein reductase] + O2 = 4,4-dimethyl-5alpha-cholesta-8,14,24-trien-3beta-ol + formate + oxidized [NADPH--hemoprotein reductase] + H2O + 2 H(+). The enzyme catalyses 24,25-dihydrolanosterol + reduced [NADPH--hemoprotein reductase] + O2 = 32-hydroxy-24,25-dihydrolanosterol + oxidized [NADPH--hemoprotein reductase] + H2O + H(+). The catalysed reaction is 32-hydroxy-24,25-dihydrolanosterol + reduced [NADPH--hemoprotein reductase] + O2 = 32-oxo-24,25-dihydrolanosterol + oxidized [NADPH--hemoprotein reductase] + 2 H2O + H(+). It catalyses the reaction 32-oxo-24,25-dihydrolanosterol + reduced [NADPH--hemoprotein reductase] + O2 = 4,4-dimethyl-8,14-cholestadien-3beta-ol + formate + oxidized [NADPH--hemoprotein reductase] + H2O + 2 H(+). Its pathway is steroid biosynthesis; zymosterol biosynthesis; zymosterol from lanosterol: step 1/6. With respect to regulation, inhibited by azalanstat. Inhibited by azole antifungal agents ketoconazole, itraconazole and fluconazole. Its function is as follows. Sterol 14alpha-demethylase that plays a critical role in the cholesterol biosynthesis pathway, being cholesterol the major sterol component in mammalian membranes as well as a precursor for bile acid and steroid hormone synthesis. Cytochrome P450 monooxygenase that catalyzes the three-step oxidative removal of the 14alpha-methyl group (C-32) of sterols such as lanosterol (lanosta-8,24-dien-3beta-ol) and 24,25-dihydrolanosterol (DHL) in the form of formate, and converts the sterols to 4,4-dimethyl-5alpha-cholesta-8,14,24-trien-3beta-ol and 4,4-dimethyl-8,14-cholestadien-3beta-ol, respectively, which are intermediates of cholesterol biosynthesis. Can also demethylate substrates not intrinsic to mammals, such as eburicol (24-methylene-24,25-dihydrolanosterol), but at a lower rate than DHL. This is Lanosterol 14-alpha demethylase from Pongo abelii (Sumatran orangutan).